Reading from the N-terminus, the 304-residue chain is UDP-N-acetylenolpyruvoylglucosamine reductase (304 aa).

Residues 33–198 (KVGGPVDILL…LEVTFNLEKG (166 aa)) form the FAD-binding PCMH-type domain. Arginine 177 is an active-site residue. Serine 227 functions as the Proton donor in the catalytic mechanism. Glutamate 297 is a catalytic residue.

Belongs to the MurB family. Requires FAD as cofactor.

The protein resides in the cytoplasm. It catalyses the reaction UDP-N-acetyl-alpha-D-muramate + NADP(+) = UDP-N-acetyl-3-O-(1-carboxyvinyl)-alpha-D-glucosamine + NADPH + H(+). The protein operates within cell wall biogenesis; peptidoglycan biosynthesis. Its function is as follows. Cell wall formation. The sequence is that of UDP-N-acetylenolpyruvoylglucosamine reductase from Clostridium kluyveri (strain NBRC 12016).